A 393-amino-acid chain; its full sequence is NAD(P)H-quinone oxidoreductase subunit H, chloroplastic (393 aa).

It belongs to the complex I 49 kDa subunit family. NDH is composed of at least 16 different subunits, 5 of which are encoded in the nucleus.

The protein localises to the plastid. Its subcellular location is the chloroplast thylakoid membrane. It carries out the reaction a plastoquinone + NADH + (n+1) H(+)(in) = a plastoquinol + NAD(+) + n H(+)(out). The catalysed reaction is a plastoquinone + NADPH + (n+1) H(+)(in) = a plastoquinol + NADP(+) + n H(+)(out). NDH shuttles electrons from NAD(P)H:plastoquinone, via FMN and iron-sulfur (Fe-S) centers, to quinones in the photosynthetic chain and possibly in a chloroplast respiratory chain. The immediate electron acceptor for the enzyme in this species is believed to be plastoquinone. Couples the redox reaction to proton translocation, and thus conserves the redox energy in a proton gradient. The chain is NAD(P)H-quinone oxidoreductase subunit H, chloroplastic from Eucalyptus globulus subsp. globulus (Tasmanian blue gum).